Here is a 294-residue protein sequence, read N- to C-terminus: Cytidine deaminase (294 aa).

CMP/dCMP-type deaminase domains lie at 48-168 (NDDE…FGPK) and 187-294 (DNTS…RVTL). Residue 89 to 91 (NME) participates in substrate binding. Residue histidine 102 participates in Zn(2+) binding. Glutamate 104 (proton donor) is an active-site residue. Residues cysteine 129 and cysteine 132 each contribute to the Zn(2+) site.

Belongs to the cytidine and deoxycytidylate deaminase family. As to quaternary structure, homodimer. Zn(2+) serves as cofactor.

The enzyme catalyses cytidine + H2O + H(+) = uridine + NH4(+). It catalyses the reaction 2'-deoxycytidine + H2O + H(+) = 2'-deoxyuridine + NH4(+). Its function is as follows. This enzyme scavenges exogenous and endogenous cytidine and 2'-deoxycytidine for UMP synthesis. This Proteus mirabilis (strain HI4320) protein is Cytidine deaminase.